The following is a 316-amino-acid chain: 4-hydroxy-3-methylbut-2-enyl diphosphate reductase (316 aa).

C17 contacts [4Fe-4S] cluster. Residues H46 and H79 each coordinate (2E)-4-hydroxy-3-methylbut-2-enyl diphosphate. H46 and H79 together coordinate dimethylallyl diphosphate. Residues H46 and H79 each coordinate isopentenyl diphosphate. C101 serves as a coordination point for [4Fe-4S] cluster. Residue H129 participates in (2E)-4-hydroxy-3-methylbut-2-enyl diphosphate binding. H129 serves as a coordination point for dimethylallyl diphosphate. H129 contributes to the isopentenyl diphosphate binding site. The Proton donor role is filled by E131. T170 contacts (2E)-4-hydroxy-3-methylbut-2-enyl diphosphate. Position 200 (C200) interacts with [4Fe-4S] cluster. (2E)-4-hydroxy-3-methylbut-2-enyl diphosphate contacts are provided by S228, S229, N230, and S273. Dimethylallyl diphosphate is bound by residues S228, S229, N230, and S273. The isopentenyl diphosphate site is built by S228, S229, N230, and S273.

This sequence belongs to the IspH family. [4Fe-4S] cluster serves as cofactor.

It carries out the reaction isopentenyl diphosphate + 2 oxidized [2Fe-2S]-[ferredoxin] + H2O = (2E)-4-hydroxy-3-methylbut-2-enyl diphosphate + 2 reduced [2Fe-2S]-[ferredoxin] + 2 H(+). The catalysed reaction is dimethylallyl diphosphate + 2 oxidized [2Fe-2S]-[ferredoxin] + H2O = (2E)-4-hydroxy-3-methylbut-2-enyl diphosphate + 2 reduced [2Fe-2S]-[ferredoxin] + 2 H(+). The protein operates within isoprenoid biosynthesis; dimethylallyl diphosphate biosynthesis; dimethylallyl diphosphate from (2E)-4-hydroxy-3-methylbutenyl diphosphate: step 1/1. Its pathway is isoprenoid biosynthesis; isopentenyl diphosphate biosynthesis via DXP pathway; isopentenyl diphosphate from 1-deoxy-D-xylulose 5-phosphate: step 6/6. Functionally, catalyzes the conversion of 1-hydroxy-2-methyl-2-(E)-butenyl 4-diphosphate (HMBPP) into a mixture of isopentenyl diphosphate (IPP) and dimethylallyl diphosphate (DMAPP). Acts in the terminal step of the DOXP/MEP pathway for isoprenoid precursor biosynthesis. The chain is 4-hydroxy-3-methylbut-2-enyl diphosphate reductase from Roseobacter denitrificans (strain ATCC 33942 / OCh 114) (Erythrobacter sp. (strain OCh 114)).